We begin with the raw amino-acid sequence, 607 residues long: UPF0329 protein ECU06_1610 (607 aa).

Disordered stretches follow at residues 312 to 410 (VHEV…RSKG) and 531 to 570 (TSSE…PPGV). Residues 313–347 (HEVKERESEEKRREEESLRNAEELLRMEEREKGEG) are compositionally biased toward basic and acidic residues. Basic residues predominate over residues 353–364 (KGKKKRGKKGAG). The span at 365–374 (KAKEESKEED) shows a compositional bias: basic and acidic residues. Residues 375 to 393 (RGEEEEESVEAEVPVEEMA) show a composition bias toward acidic residues. Over residues 531-543 (TSSEKTGKGSSPS) the composition is skewed to polar residues. Positions 549–558 (DVDEIEEDGS) are enriched in acidic residues.

The protein belongs to the UPF0329 family.

This Encephalitozoon cuniculi (strain GB-M1) (Microsporidian parasite) protein is UPF0329 protein ECU06_1610.